A 34-amino-acid polypeptide reads, in one-letter code: Photosystem II reaction center protein M (34 aa).

The helical transmembrane segment at 5–25 (ILAFIATALFILVPTAFLLII) threads the bilayer.

It belongs to the PsbM family. In terms of assembly, PSII is composed of 1 copy each of membrane proteins PsbA, PsbB, PsbC, PsbD, PsbE, PsbF, PsbH, PsbI, PsbJ, PsbK, PsbL, PsbM, PsbT, PsbX, PsbY, PsbZ, Psb30/Ycf12, at least 3 peripheral proteins of the oxygen-evolving complex and a large number of cofactors. It forms dimeric complexes.

The protein resides in the plastid. It is found in the chloroplast thylakoid membrane. In terms of biological role, one of the components of the core complex of photosystem II (PSII). PSII is a light-driven water:plastoquinone oxidoreductase that uses light energy to abstract electrons from H(2)O, generating O(2) and a proton gradient subsequently used for ATP formation. It consists of a core antenna complex that captures photons, and an electron transfer chain that converts photonic excitation into a charge separation. This subunit is found at the monomer-monomer interface. In Cucumis sativus (Cucumber), this protein is Photosystem II reaction center protein M.